The chain runs to 188 residues: Large ribosomal subunit protein bL32m (188 aa).

Positions 110, 113, 123, and 126 each coordinate Zn(2+). A disordered region spans residues 162-188 (GETPSEHDQGKRIIERERKRPSWFTQN). Basic and acidic residues predominate over residues 165 to 181 (PSEHDQGKRIIERERKR).

Belongs to the bacterial ribosomal protein bL32 family. As to quaternary structure, component of the mitochondrial ribosome large subunit (39S) which comprises a 16S rRNA and about 50 distinct proteins. In terms of processing, MRPL32 precursor is processed by the m-AAA protease (composed of AFG3L2 and SPG7), which cleaves the N-terminal transit peptide. Cleavage by the m-AAA protease takes place prior to assembly into the large subunit, an essential step for mitochondrial ribosome (mitoribosome) assembly. Proper processing by the m-AAA protease is dependent on the zinc-binding region within the tightly folded C-terminal domain of MRPL32: zinc-dependent folding halts degradation initiated from the N-terminus and triggers the release of mature MRPL32.

Its subcellular location is the mitochondrion. Its function is as follows. Component of the mitochondrial large ribosomal subunit (mt-LSU). The mitochondrial ribosome (mitoribosome) is a large ribonucleoprotein complex responsible for the synthesis of proteins inside mitochondria. The chain is Large ribosomal subunit protein bL32m (MRPL32) from Bos taurus (Bovine).